Here is a 1051-residue protein sequence, read N- to C-terminus: Helicase POLQ-like (1051 aa).

The span at 1–10 (MANKHNLCKK) shows a compositional bias: basic residues. 2 disordered regions span residues 1 to 28 (MANKHNLCKKRSLDLSEESTSESHAKRQ) and 61 to 112 (LFGT…APTD). Polar residues-rich tracts occupy residues 64–78 (TQATTSTNKMTQSGS) and 89–102 (SFPSAQSVPPNSAS). The segment covering 103–112 (KPDEASAPTD) has biased composition (basic and acidic residues). The region spanning 274-446 (LPAIRQRKNL…FLNADVYTRG (173 aa)) is the Helicase ATP-binding domain. Position 287–294 (287–294 (LPTSGGKT)) interacts with ATP. The DEAH box signature appears at 391–394 (DELH). Positions 497–689 (HLAGLISECA…NEAVGLQSLI (193 aa)) constitute a Helicase C-terminal domain.

This sequence belongs to the helicase family. SKI2 subfamily.

It localises to the nucleus. Its subcellular location is the chromosome. It catalyses the reaction Couples ATP hydrolysis with the unwinding of duplex DNA by translocating in the 3'-5' direction.. The catalysed reaction is ATP + H2O = ADP + phosphate + H(+). Functionally, single-stranded 3'-5' DNA helicase that plays a key role in homology-driven double-strand break (DSB) repair. Involved in different DSB repair mechanisms that are guided by annealing of extensive stretches of complementary bases at break ends, such as microhomology-mediated end-joining (MMEJ), single-strand annealing (SSA) or synthesis-dependent strand annealing (SDSA). The polypeptide is Helicase POLQ-like (Drosophila melanogaster (Fruit fly)).